A 652-amino-acid chain; its full sequence is DNA ligase (652 aa).

NAD(+) contacts are provided by residues Asp-29 to Asp-33, Ser-78 to Leu-79, and Glu-107. Lys-109 functions as the N6-AMP-lysine intermediate in the catalytic mechanism. Residues Arg-130, Glu-164, Lys-278, and Lys-302 each coordinate NAD(+). Positions 395, 398, 413, and 418 each coordinate Zn(2+). The BRCT domain occupies Asp-577–Leu-652.

This sequence belongs to the NAD-dependent DNA ligase family. LigA subfamily. Mg(2+) is required as a cofactor. Mn(2+) serves as cofactor.

It catalyses the reaction NAD(+) + (deoxyribonucleotide)n-3'-hydroxyl + 5'-phospho-(deoxyribonucleotide)m = (deoxyribonucleotide)n+m + AMP + beta-nicotinamide D-nucleotide.. Functionally, DNA ligase that catalyzes the formation of phosphodiester linkages between 5'-phosphoryl and 3'-hydroxyl groups in double-stranded DNA using NAD as a coenzyme and as the energy source for the reaction. It is essential for DNA replication and repair of damaged DNA. This is DNA ligase from Streptococcus uberis (strain ATCC BAA-854 / 0140J).